The chain runs to 121 residues: Piercer of microtubule wall 2 protein (121 aa).

Positions 1–10 (MTDRNRDKKS) are enriched in basic and acidic residues. The disordered stretch occupies residues 1 to 29 (MTDRNRDKKSTSPSNSDTEMKSEQLPPCV).

Belongs to the PIERCE2 family. In terms of assembly, microtubule inner protein component of sperm flagellar doublet microtubules. Interacts with CFAP53, ODAD1 and ODAD3; the interactions link the outer dynein arms docking complex (ODA-DC) to the internal microtubule inner proteins (MIP) in cilium axoneme. In terms of tissue distribution, expressed in airway epithelial cells.

It localises to the cytoplasm. It is found in the cytoskeleton. The protein resides in the cilium axoneme. Its subcellular location is the flagellum axoneme. Microtubule inner protein involved in the attachment of outer dynein arms (ODAs) to dynein-decorated doublet microtubules (DMTs) in cilia axoneme, which is required for motile cilia beating. The polypeptide is Piercer of microtubule wall 2 protein (Homo sapiens (Human)).